A 125-amino-acid polypeptide reads, in one-letter code: L-fucose mutarotase (125 aa).

His13 acts as the Proton donor in catalysis.

This sequence belongs to the RbsD / FucU family. FucU mutarotase subfamily.

The enzyme catalyses alpha-L-fucose = beta-L-fucose. Its activity is regulated as follows. Active toward L-galactopyranoside and D-arabinopyranoside but no D-fucopyranoside activity detected. In terms of biological role, plays a role in the catabolism of L-fucose. Involved in the anomeric conversion of L-fucose. In Xanthomonas campestris pv. campestris (strain ATCC 33913 / DSM 3586 / NCPPB 528 / LMG 568 / P 25), this protein is L-fucose mutarotase.